Consider the following 481-residue polypeptide: RAC-beta serine/threonine-protein kinase (481 aa).

M1 is modified (N-acetylmethionine). In terms of domain architecture, PH spans 5 to 108 (SVIKEGWLHK…WMRAIQMVAN (104 aa)). S34 is modified (phosphoserine). A disulfide bond links C60 and C77. At S126 the chain carries Phosphoserine. Residues S128 and S131 are each glycosylated (O-linked (GlcNAc) serine). In terms of domain architecture, Protein kinase spans 152–409 (FDYLKLLGKG…AKEVMEHRFF (258 aa)). ATP contacts are provided by residues 158–166 (LGKGTFGKV) and K181. Catalysis depends on D275, which acts as the Proton acceptor. Mn(2+)-binding residues include N280 and D293. The cysteines at positions 297 and 311 are disulfide-linked. O-linked (GlcNAc) threonine glycosylation is present at T306. T309 bears the Phosphothreonine; by PDPK1 mark. The O-linked (GlcNAc) threonine glycan is linked to T313. Residues 410–481 (LSINWQDVVQ…QFSYSASIRE (72 aa)) form the AGC-kinase C-terminal domain. A Phosphoserine modification is found at S447. Residue T451 is modified to Phosphothreonine. Phosphoserine occurs at positions 474 and 478. Residue S474 is glycosylated (O-linked (GlcNAc) serine; alternate).

It belongs to the protein kinase superfamily. AGC Ser/Thr protein kinase family. RAC subfamily. As to quaternary structure, interacts with BTBD10. Interacts with KCTD20. Interacts (via PH domain) with MTCP1, TCL1A and TCL1B; this interaction may facilitate AKT2 oligomerization and phosphorylation, hence increasing kinase activity. Interacts with PHB2; this interaction may be important for myogenic differentiation. Interacts (when phosphorylated) with CLIP3/ClipR-59; this interaction promotes AKT2 recruitment to the plasma membrane. Interacts with WDFY2/ProF (via WD repeats 1-3). In terms of processing, phosphorylation on Thr-309 and Ser-474 is required for full activity. Phosphorylation of the activation loop at Thr-309 by PDPK1/PDK1 is a prerequisite for full activation. Phosphorylated and activated by PDPK1/PDK1 in the presence of phosphatidylinositol 3,4,5-trisphosphate. Phosphorylation by mTORC2 in response to growth factors plays a key role in AKT1 activation: mTORC2 phosphorylates different sites depending on the context, such as Ser-474 or Ser-478, thereby facilitating subsequent phosphorylation of the activation loop by PDPK1/PDK1. Ubiquitinated; undergoes both 'Lys-48'- and 'Lys-63'-linked polyubiquitination. TRAF6 catalyzes 'Lys-63'-linked AKT2 ubiquitination; this modification may be important for AKT2 recruitment to the plasma membrane and for AKT2 activating phosphorylation. When phosphorylated, undergoes 'Lys-48'-polyubiquitination catalyzed by TTC3 in the nucleus, leading to its degradation by the proteasome. Post-translationally, O-GlcNAcylation at Thr-306 and Thr-313 inhibits activating phosphorylation at Thr-309 via the disruption of the interaction between AKT and PDPK1/PDK1. As to expression, widely expressed. Expressed in myoblasts.

Its subcellular location is the cytoplasm. It localises to the nucleus. The protein localises to the cell membrane. It is found in the early endosome. It carries out the reaction L-seryl-[protein] + ATP = O-phospho-L-seryl-[protein] + ADP + H(+). The catalysed reaction is L-threonyl-[protein] + ATP = O-phospho-L-threonyl-[protein] + ADP + H(+). With respect to regulation, phosphorylation at Thr-309 (in the kinase domain) and Ser-474 (in the C-terminal regulatory region) is required for full activation. In adipocytes and hepatocytes, the activation is induced by insulin. Aminofurazans, such as 4-[2-(4-amino-2,5-dihydro-1,2,5-oxadiazol-3-yl)-6-{[(1S)-3-amino-1-phenylpropyl]oxy}-1-ethyl-1H-imidazo[4,5-c]pyridin-4-yl]-2-methylbut-3-yn-2-ol (compound 32), are potent AKT2 inhibitors. AKT2 phosphorylation of PKP1 is induced by insulin. Functionally, serine/threonine kinase closely related to AKT1 and AKT3. All 3 enzymes, AKT1, AKT2 and AKT3, are collectively known as AKT kinase. AKT regulates many processes including metabolism, proliferation, cell survival, growth and angiogenesis, through the phosphorylation of a range of downstream substrates. Over 100 substrates have been reported so far, although for most of them, the precise AKT kinase catalyzing the reaction was not specified. AKT regulates glucose uptake by mediating insulin-induced translocation of the SLC2A4/GLUT4 glucose transporter to the cell surface. Phosphorylation of PTPN1 at 'Ser-50' negatively modulates its phosphatase activity preventing dephosphorylation of the insulin receptor and the attenuation of insulin signaling. Phosphorylation of TBC1D4 triggers the binding of this effector to inhibitory 14-3-3 proteins, which is required for insulin-stimulated glucose transport. AKT also regulates the storage of glucose in the form of glycogen by phosphorylating GSK3A at 'Ser-21' and GSK3B at 'Ser-9', resulting in inhibition of its kinase activity. Phosphorylation of GSK3 isoforms by AKT is also thought to be one mechanism by which cell proliferation is driven. AKT also regulates cell survival via the phosphorylation of MAP3K5 (apoptosis signal-related kinase). Phosphorylation of 'Ser-83' decreases MAP3K5 kinase activity stimulated by oxidative stress and thereby prevents apoptosis. AKT mediates insulin-stimulated protein synthesis by phosphorylating TSC2 at 'Ser-939' and 'Thr-1462', thereby activating mTORC1 signaling and leading to both phosphorylation of 4E-BP1 and in activation of RPS6KB1. AKT is involved in the phosphorylation of members of the FOXO factors (Forkhead family of transcription factors), leading to binding of 14-3-3 proteins and cytoplasmic localization. In particular, FOXO1 is phosphorylated at 'Thr-24', 'Ser-256' and 'Ser-319'. FOXO3 and FOXO4 are phosphorylated on equivalent sites. AKT has an important role in the regulation of NF-kappa-B-dependent gene transcription and positively regulates the activity of CREB1 (cyclic AMP (cAMP)-response element binding protein). The phosphorylation of CREB1 induces the binding of accessory proteins that are necessary for the transcription of pro-survival genes such as BCL2 and MCL1. AKT phosphorylates 'Ser-454' on ATP citrate lyase (ACLY), thereby potentially regulating ACLY activity and fatty acid synthesis. Activates the 3B isoform of cyclic nucleotide phosphodiesterase (PDE3B) via phosphorylation of 'Ser-273', resulting in reduced cyclic AMP levels and inhibition of lipolysis. Phosphorylates PIKFYVE on 'Ser-318', which results in increased PI(3)P-5 activity. The Rho GTPase-activating protein DLC1 is another substrate and its phosphorylation is implicated in the regulation cell proliferation and cell growth. AKT plays a role as key modulator of the AKT-mTOR signaling pathway controlling the tempo of the process of newborn neurons integration during adult neurogenesis, including correct neuron positioning, dendritic development and synapse formation. Signals downstream of phosphatidylinositol 3-kinase (PI(3)K) to mediate the effects of various growth factors such as platelet-derived growth factor (PDGF), epidermal growth factor (EGF), insulin and insulin-like growth factor 1 (IGF1). AKT mediates the antiapoptotic effects of IGF1. Essential for the SPATA13-mediated regulation of cell migration and adhesion assembly and disassembly. May be involved in the regulation of the placental development. In response to lysophosphatidic acid stimulation, inhibits the ciliogenesis cascade. In this context, phosphorylates WDR44, hence stabilizing its interaction with Rab11 and preventing the formation of the ciliogenic Rab11-FIP3-RAB3IP complex. Also phosphorylates RAB3IP/Rabin8, thus may affect RAB3IP guanine nucleotide exchange factor (GEF) activity toward Rab8, which is important for cilia growth. Phosphorylates PKP1, facilitating its interaction with YWHAG and translocation to the nucleus, ultimately resulting in a reduction in keratinocyte intercellular adhesion. Phosphorylation of PKP1 increases PKP1 protein stability, translocation to the cytoplasm away from desmosome plaques and PKP1-driven cap-dependent translation. Its function is as follows. Several AKT2-specific substrates have been identified, including ANKRD2, C2CD5, CLK2 and PITX2. May play a role in myoblast differentiation. In this context, may act through PITX2 phosphorylation. Unphosphorylated PITX2 associates with an ELAVL1/HuR-containing complex, which stabilizes CCND1 cyclin mRNA, ensuring cell proliferation. Phosphorylation by AKT2 impairs this association, leading to CCND1 mRNA destabilization and progression towards differentiation. Also involved in the negative regulation of myogenesis in response to stress conditions. In this context, acts by phosphorylating ANKRD2. May also be a key regulator of glucose uptake. Regulates insulin-stimulated glucose transport by the increase of glucose transporter GLUT4 translocation from intracellular stores to the plasma membrane. In this context, acts by phosphorylating C2CD5/CDP138 on 'Ser-197' in insulin-stimulated adipocytes. Through the phosphorylation of CLK2 on 'Thr-343', involved in insulin-regulated suppression of hepatic gluconeogenesis. This is RAC-beta serine/threonine-protein kinase from Homo sapiens (Human).